The sequence spans 338 residues: Patr class I histocompatibility antigen, alpha chain G (338 aa).

The N-terminal stretch at 1–24 (MVVMAPRTLFLLLSGALTLTETWA) is a signal peptide. Residues 25 to 114 (GSHSMRYFSA…LRGYYNQSEA (90 aa)) form an alpha-1 region. Residues 25–308 (GSHSMRYFSA…KQSSLPTIPI (284 aa)) are Extracellular-facing. The N-linked (GlcNAc...) asparagine glycan is linked to Asn110. Residues 115–206 (SSHTLQWMIG…ENGKEMLQRA (92 aa)) are alpha-2. 2 disulfides stabilise this stretch: Cys125-Cys188 and Cys227-Cys283. Residues 207–298 (DPPKTHVTHH…GLPEPLMLRW (92 aa)) are alpha-3. The 91-residue stretch at 209–299 (PKTHVTHHPV…LPEPLMLRWK (91 aa)) folds into the Ig-like C1-type domain. Positions 299–308 (KQSSLPTIPI) are connecting peptide. A helical membrane pass occupies residues 309-332 (MGIVAGLVVLAAVVTGAAVAAVLW). Over 333–338 (RKKSSD) the chain is Cytoplasmic.

Belongs to the MHC class I family. In terms of assembly, heterodimer of an alpha chain and a beta chain (beta-2-microglobulin). Homodimer; disulfide-linked. Binds to LILRB1 and LILRB2.

It is found in the cell membrane. Functionally, involved in the presentation of foreign antigens to the immune system. In Pan troglodytes (Chimpanzee), this protein is Patr class I histocompatibility antigen, alpha chain G (Patr-G).